The chain runs to 158 residues: tRNA (cytidine(34)-2'-O)-methyltransferase (158 aa).

3 residues coordinate S-adenosyl-L-methionine: Gly103, Ile123, and Ser131.

It belongs to the class IV-like SAM-binding methyltransferase superfamily. RNA methyltransferase TrmH family. TrmL subfamily. As to quaternary structure, homodimer.

It localises to the cytoplasm. It carries out the reaction cytidine(34) in tRNA + S-adenosyl-L-methionine = 2'-O-methylcytidine(34) in tRNA + S-adenosyl-L-homocysteine + H(+). The enzyme catalyses 5-carboxymethylaminomethyluridine(34) in tRNA(Leu) + S-adenosyl-L-methionine = 5-carboxymethylaminomethyl-2'-O-methyluridine(34) in tRNA(Leu) + S-adenosyl-L-homocysteine + H(+). Its function is as follows. Methylates the ribose at the nucleotide 34 wobble position in the two leucyl isoacceptors tRNA(Leu)(CmAA) and tRNA(Leu)(cmnm5UmAA). Catalyzes the methyl transfer from S-adenosyl-L-methionine to the 2'-OH of the wobble nucleotide. The polypeptide is tRNA (cytidine(34)-2'-O)-methyltransferase (Ancylobacter novellus (strain ATCC 8093 / DSM 506 / JCM 20403 / CCM 1077 / IAM 12100 / NBRC 12443 / NCIMB 10456) (Starkeya novella)).